The chain runs to 102 residues: Large ribosomal subunit protein bL21 (102 aa).

The protein belongs to the bacterial ribosomal protein bL21 family. In terms of assembly, part of the 50S ribosomal subunit. Contacts protein L20.

Its function is as follows. This protein binds to 23S rRNA in the presence of protein L20. The polypeptide is Large ribosomal subunit protein bL21 (Ehrlichia ruminantium (strain Gardel)).